Consider the following 859-residue polypeptide: Transforming growth factor-beta receptor-associated protein 1 (859 aa).

The CNH domain occupies 24–297; it reads RGLLECVECC…HILQDFEGRV (274 aa). The CHCR repeat unit spans residues 563 to 727; that stretch reads KRPLDEQQSG…LLAVYLGPGP (165 aa).

It belongs to the TRAP1 family. Interacts with TGFBR2 and ACVR2B; in the absence of ligand stimulation. Interacts with TGFBR1, ACVRL1, BMPR1A and ACVR1B; in the absence of ligand stimulation and to a less extent. Interacts with SMAD4; the interaction seems to be mutually exclusive with the interaction of SMAD4 and phosphorylated SMAD2. May interact with ALOX5. Interacts with RAB5C. Interacts with VPS8, VPS11 and VPS16. Component of the putative class C core vacuole/endosome tethering (CORVET) complex; the core of which composed of the class C Vps proteins VPS11, VPS16, VPS18 and VPS33A, is associated with VPS8 and TGFBRAP1.

It localises to the cytoplasm. Its subcellular location is the early endosome. Plays a role in the TGF-beta/activin signaling pathway. It associates with inactive heteromeric TGF-beta and activin receptor complexes, mainly through the type II receptor, and is released upon activation of signaling. May recruit SMAD4 to the vicinity of the receptor complex and facilitate its interaction with receptor-regulated Smads, such as SMAD2. Functionally, plays a role in vesicle-mediated protein trafficking of the endocytic membrane transport pathway. Believed to act as a component of the putative CORVET endosomal tethering complexes which is proposed to be involved in the Rab5-to-Rab7 endosome conversion probably implicating MON1A/B, and via binding SNAREs and SNARE complexes to mediate tethering and docking events during SNARE-mediated membrane fusion. The CORVET complex is proposed to function as a Rab5 effector to mediate early endosome fusion probably in specific endosome subpopulations. Functions predominantly in APPL1-containing endosomes and in degradative but not recycling trafficking of endocytosed cargo. In Bos taurus (Bovine), this protein is Transforming growth factor-beta receptor-associated protein 1 (TGFBRAP1).